The chain runs to 338 residues: Fructose-1,6-bisphosphatase class 1 1 (338 aa).

Mg(2+) is bound by residues Glu-91, Asp-113, Leu-115, and Asp-116. Residues 116-119 (DGSS), Asn-208, and Lys-274 contribute to the substrate site. Mg(2+) is bound at residue Glu-280.

Belongs to the FBPase class 1 family. As to quaternary structure, homotetramer. It depends on Mg(2+) as a cofactor.

It is found in the cytoplasm. It catalyses the reaction beta-D-fructose 1,6-bisphosphate + H2O = beta-D-fructose 6-phosphate + phosphate. It participates in carbohydrate biosynthesis; gluconeogenesis. This is Fructose-1,6-bisphosphatase class 1 1 from Cupriavidus necator (strain ATCC 17699 / DSM 428 / KCTC 22496 / NCIMB 10442 / H16 / Stanier 337) (Ralstonia eutropha).